The primary structure comprises 137 residues: Large ribosomal subunit protein uL16 (137 aa).

The protein belongs to the universal ribosomal protein uL16 family. As to quaternary structure, part of the 50S ribosomal subunit.

Functionally, binds 23S rRNA and is also seen to make contacts with the A and possibly P site tRNAs. This is Large ribosomal subunit protein uL16 from Agrobacterium fabrum (strain C58 / ATCC 33970) (Agrobacterium tumefaciens (strain C58)).